An 838-amino-acid polypeptide reads, in one-letter code: Periplasmic nitrate reductase (838 aa).

Positions 1-29 (MKVSRRAFIKQTAAAATASVAGVTLPAGA) form a signal peptide, tat-type signal. Residues 41–97 (LKWSKAPCRFCGTGCGVEVAVKDNRVVATQGDPKAEVNRGLNCVKGYFLSKIMYGKD) enclose the 4Fe-4S Mo/W bis-MGD-type domain. Cysteine 48, cysteine 51, cysteine 55, and cysteine 83 together coordinate [4Fe-4S] cluster. Mo-bis(molybdopterin guanine dinucleotide)-binding positions include lysine 85, glutamine 152, asparagine 177, cysteine 181, 214-221 (WGSNMAEM), 245-249 (STFTH), methionine 382, glutamine 386, asparagine 492, 518-519 (SD), lysine 541, aspartate 568, and 728-737 (TGRVLEHWHS). Tryptophan 804 serves as a coordination point for substrate. Mo-bis(molybdopterin guanine dinucleotide) contacts are provided by asparagine 812 and lysine 829.

The protein belongs to the prokaryotic molybdopterin-containing oxidoreductase family. NasA/NapA/NarB subfamily. In terms of assembly, component of the periplasmic nitrate reductase NapAB complex composed of NapA and NapB. [4Fe-4S] cluster serves as cofactor. Requires Mo-bis(molybdopterin guanine dinucleotide) as cofactor. In terms of processing, predicted to be exported by the Tat system. The position of the signal peptide cleavage has not been experimentally proven.

The protein resides in the periplasm. It catalyses the reaction 2 Fe(II)-[cytochrome] + nitrate + 2 H(+) = 2 Fe(III)-[cytochrome] + nitrite + H2O. In terms of biological role, catalytic subunit of the periplasmic nitrate reductase complex NapAB. Receives electrons from NapB and catalyzes the reduction of nitrate to nitrite. This is Periplasmic nitrate reductase from Ralstonia pickettii (strain 12J).